The following is a 105-amino-acid chain: Antimicrobial peptide 1 (105 aa).

The first 26 residues, 1–26 (METKRLAYVMFVLVCLFLAMAQPSQA), serve as a signal peptide directing secretion. 3 disulfides stabilise this stretch: C37–C93, C47–C105, and C49–C77.

In terms of tissue distribution, detected at higher levels in needles and twigs from canker-resistant seedlings than in needles from canker-susceptible plants. During summer, detected on cankered, healthy and marginal bark. During winter, detected at lower levels in cankered bark and bark from the canker margin than in healthy bark (at protein level).

It localises to the secreted. The protein resides in the cell wall. Antimicrobial peptide. This chain is Antimicrobial peptide 1, found in Pinus monticola (Western white pine).